Reading from the N-terminus, the 265-residue chain is Hydroxyethylthiazole kinase 2 (265 aa).

Substrate is bound at residue Met-39. 2 residues coordinate ATP: Lys-115 and Thr-168. Gly-195 contributes to the substrate binding site.

The protein belongs to the Thz kinase family. The cofactor is Mg(2+).

The catalysed reaction is 5-(2-hydroxyethyl)-4-methylthiazole + ATP = 4-methyl-5-(2-phosphooxyethyl)-thiazole + ADP + H(+). Its pathway is cofactor biosynthesis; thiamine diphosphate biosynthesis; 4-methyl-5-(2-phosphoethyl)-thiazole from 5-(2-hydroxyethyl)-4-methylthiazole: step 1/1. Catalyzes the phosphorylation of the hydroxyl group of 4-methyl-5-beta-hydroxyethylthiazole (THZ). The sequence is that of Hydroxyethylthiazole kinase 2 from Clostridium botulinum (strain ATCC 19397 / Type A).